Consider the following 85-residue polypeptide: V-type proton ATPase subunit f (85 aa).

At 1–10 (MRPVVSTGKA) the chain is on the lumenal side. A helical transmembrane segment spans residues 11-31 (WCCTVLSAFGVVILSVIAHLF). The Cytoplasmic portion of the chain corresponds to 32–54 (NTNHESFVGSINDPEDGPAVAHT). A helical membrane pass occupies residues 55-75 (VYLAALVYLVFFVFCGFQVYL). Residues 76–85 (ARRKPSIELR) lie on the Lumenal side of the membrane.

V-ATPase is a heteromultimeric enzyme composed of a peripheral catalytic V1 complex (components A to H) attached to an integral membrane V0 proton pore complex (components: a, c, c', c'', d, e, f and VOA1).

It is found in the endoplasmic reticulum membrane. The protein resides in the vacuole membrane. In terms of biological role, accessory component of the V0 complex of vacuolar(H+)-ATPase (V-ATPase), a multisubunit enzyme composed of a peripheral complex (V1) that hydrolyzes ATP and a membrane integral complex (V0) that translocates protons. V-ATPase is responsible for acidifying and maintaining the pH of intracellular compartments. The protein is V-type proton ATPase subunit f of Saccharomyces cerevisiae (strain ATCC 204508 / S288c) (Baker's yeast).